The following is a 275-amino-acid chain: 4-diphosphocytidyl-2-C-methyl-D-erythritol kinase (275 aa).

Lys-8 is an active-site residue. 86-96 (PEGAGLGGGSS) lines the ATP pocket. Asp-125 is an active-site residue.

This sequence belongs to the GHMP kinase family. IspE subfamily.

The enzyme catalyses 4-CDP-2-C-methyl-D-erythritol + ATP = 4-CDP-2-C-methyl-D-erythritol 2-phosphate + ADP + H(+). It participates in isoprenoid biosynthesis; isopentenyl diphosphate biosynthesis via DXP pathway; isopentenyl diphosphate from 1-deoxy-D-xylulose 5-phosphate: step 3/6. In terms of biological role, catalyzes the phosphorylation of the position 2 hydroxy group of 4-diphosphocytidyl-2C-methyl-D-erythritol. The chain is 4-diphosphocytidyl-2-C-methyl-D-erythritol kinase from Thermus thermophilus (strain ATCC BAA-163 / DSM 7039 / HB27).